The sequence spans 376 residues: Probable cysteine protease RDL3 (376 aa).

An N-terminal signal peptide occupies residues 1-27 (MAISFRTLALLTLSVLLISISLGVVTA). Residues 28–126 (TESQRNEGEV…ERYQYKEGDV (99 aa)) constitute a propeptide, activation peptide. Residue Asn80 is glycosylated (N-linked (GlcNAc...) asparagine). 2 disulfide bridges follow: Cys149–Cys192 and Cys183–Cys226. The active site involves Cys152. An N-linked (GlcNAc...) asparagine glycan is attached at Asn270. A disulfide bridge connects residues Cys283 and Cys336. Residues His290 and Asn311 contribute to the active site. Residue Asn349 is glycosylated (N-linked (GlcNAc...) asparagine).

It belongs to the peptidase C1 family. Expressed in root hairs.

In terms of biological role, probable thiol protease. The polypeptide is Probable cysteine protease RDL3 (Arabidopsis thaliana (Mouse-ear cress)).